Reading from the N-terminus, the 338-residue chain is Peroxidase 15 (338 aa).

Positions 1 to 22 are cleaved as a signal peptide; sequence MARIGSFLIILYLIYALTLCIC. 4 disulfides stabilise this stretch: Cys-45-Cys-125, Cys-78-Cys-83, Cys-131-Cys-332, and Cys-210-Cys-242. His-76 functions as the Proton acceptor in the catalytic mechanism. Positions 77, 80, 82, 84, and 86 each coordinate Ca(2+). Pro-173 provides a ligand contact to substrate. Asn-176 is a glycosylation site (N-linked (GlcNAc...) asparagine). His-203 is a heme b binding site. Thr-204 is a Ca(2+) binding site. Residues Asn-219 and Asn-250 are each glycosylated (N-linked (GlcNAc...) asparagine). Ca(2+) contacts are provided by Asp-255, Ser-258, and Asp-263.

Belongs to the peroxidase family. Classical plant (class III) peroxidase subfamily. Requires heme b as cofactor. Ca(2+) is required as a cofactor.

It localises to the secreted. The enzyme catalyses 2 a phenolic donor + H2O2 = 2 a phenolic radical donor + 2 H2O. Functionally, removal of H(2)O(2), oxidation of toxic reductants, biosynthesis and degradation of lignin, suberization, auxin catabolism, response to environmental stresses such as wounding, pathogen attack and oxidative stress. These functions might be dependent on each isozyme/isoform in each plant tissue. This chain is Peroxidase 15 (PER15), found in Arabidopsis thaliana (Mouse-ear cress).